Reading from the N-terminus, the 227-residue chain is Isopentenyl-diphosphate Delta-isomerase 1 (227 aa).

K36 is a substrate binding site. Mg(2+)-binding residues include H40 and H51. The Nudix hydrolase domain maps to 49–199 (LLHRAFSVFL…EIKITPWFQI (151 aa)). Substrate contacts are provided by R70 and K74. C86 is a catalytic residue. S87 provides a ligand contact to substrate. Mg(2+)-binding residues include E146 and E148. E148 is an active-site residue. K176 bears the N6-acetyllysine mark. Positions 225–227 (HRM) match the Microbody targeting signal motif.

Belongs to the IPP isomerase type 1 family. In terms of assembly, monomer. The cofactor is Mg(2+).

Its subcellular location is the peroxisome. The catalysed reaction is isopentenyl diphosphate = dimethylallyl diphosphate. It functions in the pathway isoprenoid biosynthesis; dimethylallyl diphosphate biosynthesis; dimethylallyl diphosphate from isopentenyl diphosphate: step 1/1. In terms of biological role, catalyzes the 1,3-allylic rearrangement of the homoallylic substrate isopentenyl (IPP) to its highly electrophilic allylic isomer, dimethylallyl diphosphate (DMAPP). The protein is Isopentenyl-diphosphate Delta-isomerase 1 (IDI1) of Macaca fascicularis (Crab-eating macaque).